The following is a 355-amino-acid chain: Serum paraoxonase/arylesterase 1 (355 aa).

The cysteines at positions 42 and 353 are disulfide-linked. Ca(2+)-binding residues include Glu53 and Asp54. His115 acts as the Proton acceptor in catalysis. Residues Ile117, Asn168, Asp169, and Asn224 each contribute to the Ca(2+) site. A glycan (N-linked (GlcNAc...) asparagine) is linked at Asn253. Ca(2+) is bound by residues Asp269 and Asn270. Residues Asn270 and Asn324 are each glycosylated (N-linked (GlcNAc...) asparagine).

It belongs to the paraoxonase family. Homodimer. Heterooligomer with phosphate-binding protein (HPBP). Interacts with CLU. The cofactor is Ca(2+). Glycosylated. In terms of processing, the signal sequence is not cleaved. Post-translationally, present in two forms, form B contains a disulfide bond, form A does not. Plasma, associated with HDL (at protein level). Expressed in liver, but not in heart, brain, placenta, lung, skeletal muscle, kidney or pancreas.

The protein localises to the secreted. The protein resides in the extracellular space. The catalysed reaction is a phenyl acetate + H2O = a phenol + acetate + H(+). The enzyme catalyses An aryl dialkyl phosphate + H2O = dialkyl phosphate + an aryl alcohol.. It catalyses the reaction an N-acyl-L-homoserine lactone + H2O = an N-acyl-L-homoserine + H(+). In terms of biological role, hydrolyzes the toxic metabolites of a variety of organophosphorus insecticides. Capable of hydrolyzing a broad spectrum of organophosphate substrates and lactones, and a number of aromatic carboxylic acid esters. Mediates an enzymatic protection of low density lipoproteins against oxidative modification and the consequent series of events leading to atheroma formation. This chain is Serum paraoxonase/arylesterase 1 (PON1), found in Homo sapiens (Human).